A 334-amino-acid polypeptide reads, in one-letter code: Homoserine O-acetyltransferase (334 aa).

In terms of domain architecture, AB hydrolase-1 spans 61 to 318 (LVLHALTGDS…GSIHGHDAFL (258 aa)). The Nucleophile role is filled by serine 148. Arginine 205 is a binding site for substrate. Residues aspartate 285 and histidine 314 contribute to the active site. Residue aspartate 315 participates in substrate binding.

It belongs to the AB hydrolase superfamily. MetX family. In terms of assembly, homodimer.

Its subcellular location is the cytoplasm. The enzyme catalyses L-homoserine + acetyl-CoA = O-acetyl-L-homoserine + CoA. It participates in amino-acid biosynthesis; L-methionine biosynthesis via de novo pathway; O-acetyl-L-homoserine from L-homoserine: step 1/1. In terms of biological role, transfers an acetyl group from acetyl-CoA to L-homoserine, forming acetyl-L-homoserine. The polypeptide is Homoserine O-acetyltransferase (Deinococcus radiodurans (strain ATCC 13939 / DSM 20539 / JCM 16871 / CCUG 27074 / LMG 4051 / NBRC 15346 / NCIMB 9279 / VKM B-1422 / R1)).